The chain runs to 70 residues: Eglin C (70 aa).

This sequence belongs to the protease inhibitor I13 (potato type I serine protease inhibitor) family.

Inhibits both elastase and cathepsin G. The polypeptide is Eglin C (Hirudo medicinalis (Medicinal leech)).